Here is a 378-residue protein sequence, read N- to C-terminus: O-methyltransferase dpfgI (378 aa).

S-adenosyl-L-methionine-binding positions include 232–233, D257, 279–280, and R295; these read GG and NF. Catalysis depends on H299, which acts as the Proton acceptor.

The protein belongs to the class I-like SAM-binding methyltransferase superfamily. Cation-independent O-methyltransferase family.

It functions in the pathway secondary metabolite biosynthesis; terpenoid biosynthesis. Functionally, O-methyltransferase; part of the gene cluster that mediates the biosynthesis of diterpenoid pyrones. The first step of the pathway is the synthesis of the alpha-pyrone moiety by the polyketide synthase dpfgA via condensation of one acetyl-CoA starter unit with 3 malonyl-CoA units and 2 methylations. The alpha-pyrone is then combined with geranylgeranyl pyrophosphate (GGPP) formed by the GGPP synthase dpfgD through the action of the prenyltransferase dpfgC to yield a linear alpha-pyrone diterpenoid. Subsequent steps in the diterpenoid pyrone biosynthetic pathway involve the decalin core formation, which is initiated by the epoxidation of the C10-C11 olefin by the FAD-dependent oxidoreductase dpfgE, and is followed by a cyclization cascade catalyzed by the terpene cyclase dpfgB. The short chain dehydrogenase/reductase dpfgG then oxidizes the 8S hydroxy group to a ketone and the short chain dehydrogenase/reductase dpfgH reduces the ketone to the 8R hydroxy group to yield higginsianin B. Higginsianin B is further methylated by the methyltransferase dpfgI to produce the intermediate named FDDP B. The cytochrome P450 monooxygenase dfgpJ then catalyzes a three-step oxidation at C-27 to generate a carboxylic acid as well as C-26 hydroxylation. Finally, methyltransferase dpfgK methylates the carboxylic acid generated by dpfgJ, yielding the final diterpenoid pyrones from the pathway which were named FDDP D and FDDP E. In Gibberella zeae (strain ATCC MYA-4620 / CBS 123657 / FGSC 9075 / NRRL 31084 / PH-1) (Wheat head blight fungus), this protein is O-methyltransferase dpfgI.